The primary structure comprises 126 residues: Nucleoside diphosphate kinase B (126 aa).

Residues lysine 6, phenylalanine 37, threonine 68, arginine 79, and asparagine 89 each contribute to the ATP site. Histidine 92 functions as the Pros-phosphohistidine intermediate in the catalytic mechanism.

The protein belongs to the NDK family. Mg(2+) is required as a cofactor.

The protein resides in the cytoplasm. Its subcellular location is the nucleus. It localises to the cell projection. The protein localises to the lamellipodium. It is found in the ruffle. The catalysed reaction is a 2'-deoxyribonucleoside 5'-diphosphate + ATP = a 2'-deoxyribonucleoside 5'-triphosphate + ADP. It catalyses the reaction a ribonucleoside 5'-diphosphate + ATP = a ribonucleoside 5'-triphosphate + ADP. Its function is as follows. Major role in the synthesis of nucleoside triphosphates other than ATP. This is Nucleoside diphosphate kinase B (nme2) from Macruronus magellanicus (Patagonian grenadier).